Here is a 101-residue protein sequence, read N- to C-terminus: Interleukin-8 (101 aa).

The first 22 residues, 1–22 (MTSKLAVALLAAFLLSAALCEA), serve as a signal peptide directing secretion. R27 carries the citrulline modification. 2 cysteine pairs are disulfide-bonded: C34–C61 and C36–C77.

It belongs to the intercrine alpha (chemokine CxC) family. As to quaternary structure, homodimer. Interacts with TNFAIP6 (via Link domain); this interaction interferes with chemokine binding to glycosaminoglycans. Citrullination at Arg-27 prevents proteolysis, and dampens tissue inflammation, it also enhances leukocytosis, possibly through impaired chemokine clearance from the blood circulation.

Its subcellular location is the secreted. Chemotactic factor that mediates inflammatory response by attracting neutrophils, basophils, and T-cells to clear pathogens and protect the host from infection. Also plays an important role in neutrophil activation. Released in response to an inflammatory stimulus, exerts its effect by binding to the G-protein-coupled receptors CXCR1 and CXCR2, primarily found in neutrophils, monocytes and endothelial cells. G-protein heterotrimer (alpha, beta, gamma subunits) constitutively binds to CXCR1/CXCR2 receptor and activation by IL8 leads to beta and gamma subunits release from Galpha (GNAI2 in neutrophils) and activation of several downstream signaling pathways including PI3K and MAPK pathways. This chain is Interleukin-8 (CXCL8), found in Ovis aries (Sheep).